The sequence spans 274 residues: Large ribosomal subunit protein uL2cz/uL2cy (274 aa).

2 disordered regions span residues 1–21 and 224–274; these read MAIH…VDSQ and NPVD…RRSK.

It belongs to the universal ribosomal protein uL2 family. As to quaternary structure, part of the 50S ribosomal subunit.

It is found in the plastid. Its subcellular location is the chloroplast. The sequence is that of Large ribosomal subunit protein uL2cz/uL2cy (rpl2-A) from Populus trichocarpa (Western balsam poplar).